The primary structure comprises 271 residues: Nus factor SuhB (271 aa).

3 residues coordinate Mg(2+): Glu67, Asp86, and Leu88. Position 67 (Glu67) interacts with substrate. Residues 88 to 91, Arg187, and Asp216 each bind substrate; that span reads LDGT.

Belongs to the inositol monophosphatase superfamily. As to quaternary structure, homodimer. The rRNA transcription and antitermination complex (rrnTAC) consists of RNA polymerase (RNAP), NusA, NusB, NusE (rpsJ), NusG, SubB, ribosomal protein S4, DNA and precursor rRNA; S4 is more flexible than other subunits. Interacts with the ribosome and with RNA polymerase. Mg(2+) is required as a cofactor.

The protein resides in the cytoplasm. It carries out the reaction a myo-inositol phosphate + H2O = myo-inositol + phosphate. Functionally, part of the processive rRNA transcription and antitermination complex (rrnTAC). The complex forms an RNA-chaperone ring around the RNA exit tunnel of RNA polymerase (RNAP). It supports rapid transcription and antitermination of rRNA operons, cotranscriptional rRNA folding, and annealing of distal rRNA regions to allow correct ribosome biogenesis. This subunit may play a central role in organizing the structure. A ribosome-associated protein, deletion of which alters the expression of 494 genes, suggesting a role in global gene regulation. Involved in control of pathogenesis-related genes. Required for the activation of virulence factors associated with acute infections (type 3 secretion system, T3SS) while suppressing virulence factors associated with chronic infections (biofilm formation and type 6 secretion system, T6SS). It probably acts at a post-transcriptional level. The protein is Nus factor SuhB of Pseudomonas aeruginosa (strain ATCC 15692 / DSM 22644 / CIP 104116 / JCM 14847 / LMG 12228 / 1C / PRS 101 / PAO1).